The sequence spans 344 residues: Cell adhesion molecule CEACAM6 (344 aa).

The signal sequence occupies residues Met1 to Ala34. One can recognise an Ig-like V-type domain in the interval Lys35–Pro142. N-linked (GlcNAc...) asparagine glycans are attached at residues Asn104, Asn111, Asn115, Asn152, Asn173, Asn197, Asn224, Asn256, Asn274, Asn288, Asn292, and Asn309. Ig-like C2-type domains follow at residues Pro145–Asn232 and Pro240–Thr314. Residues Cys167 and Cys215 are joined by a disulfide bond. Residues Cys259 and Cys299 are joined by a disulfide bond. Gly320 is lipidated: GPI-anchor amidated glycine. A propeptide spans Ser321–Ile344 (removed in mature form).

Belongs to the immunoglobulin superfamily. CEA family. In terms of assembly, homodimer; homodimerizes via its Ig-like V-type domain. Heterodimer with CEACAM8; heterodimerizes via its Ig-like V-type domain. Glycosylated. Expressed in neutrophils. Expressed in columnar epithelial and goblet cells of the colon. Expressed in numerous tumor cell lines (at protein level).

It localises to the cell membrane. It is found in the apical cell membrane. The protein localises to the cell surface. In terms of biological role, cell surface glycoprotein that plays a role in cell adhesion and tumor progression. Intercellular adhesion occurs in a calcium- and fibronectin-independent manner. Mediates homophilic and heterophilic cell adhesion with other carcinoembryonic antigen-related cell adhesion molecules, such as CEACAM5 and CEACAM8. Heterophilic interaction with CEACAM8 occurs in activated neutrophils. Plays a role in neutrophil adhesion to cytokine-activated endothelial cells. Plays a role in cell migration and cell adhesion to endothelial cells. The protein is Cell adhesion molecule CEACAM6 of Homo sapiens (Human).